Consider the following 422-residue polypeptide: Dihydrolipoyllysine-residue succinyltransferase component of 2-oxoglutarate dehydrogenase complex (422 aa).

The Lipoyl-binding domain maps to 1–76 (MPEVKVPELA…EVGQAIAVIG (76 aa)). An N6-lipoyllysine modification is found at K42. The tract at residues 77 to 184 (EGSGNASKEN…APAKEEKKYN (108 aa)) is disordered. Polar residues-rich tracts occupy residues 80–94 (GNAS…TPQQ) and 114–130 (EVNQ…NATP). A Peripheral subunit-binding (PSBD) domain is found at 127 to 163 (NATPSARRYARENGVNLAEVSPKTNDVVRKEDIDKKQ). Over residues 152–163 (DVVRKEDIDKKQ) the composition is skewed to basic and acidic residues. Over residues 164 to 176 (QAPASTQTTQQAP) the composition is skewed to low complexity. Active-site residues include H393 and D397.

It belongs to the 2-oxoacid dehydrogenase family. Forms a 24-polypeptide structural core with octahedral symmetry. Part of the 2-oxoglutarate dehydrogenase (OGDH) complex composed of E1 (2-oxoglutarate dehydrogenase), E2 (dihydrolipoamide succinyltransferase) and E3 (dihydrolipoamide dehydrogenase); the complex contains multiple copies of the three enzymatic components (E1, E2 and E3). (R)-lipoate is required as a cofactor.

The enzyme catalyses N(6)-[(R)-dihydrolipoyl]-L-lysyl-[protein] + succinyl-CoA = N(6)-[(R)-S(8)-succinyldihydrolipoyl]-L-lysyl-[protein] + CoA. Its pathway is amino-acid degradation; L-lysine degradation via saccharopine pathway; glutaryl-CoA from L-lysine: step 6/6. Its function is as follows. E2 component of the 2-oxoglutarate dehydrogenase (OGDH) complex which catalyzes the second step in the conversion of 2-oxoglutarate to succinyl-CoA and CO(2). This Staphylococcus aureus (strain bovine RF122 / ET3-1) protein is Dihydrolipoyllysine-residue succinyltransferase component of 2-oxoglutarate dehydrogenase complex (odhB).